Here is a 404-residue protein sequence, read N- to C-terminus: Putative gustatory receptor 94a (404 aa).

Topologically, residues 1–11 are cytoplasmic; it reads MDFTSDYAHRR. Residues 12–32 form a helical membrane-spanning segment; it reads MVKFLTIILIGFMTVFGLLAN. At 33 to 43 the chain is on the extracellular side; the sequence is RYRAGRRERFR. The helical transmembrane segment at 44 to 64 threads the bilayer; it reads FSKANLAFASLWAIAFSLVYG. Topologically, residues 65 to 133 are cytoplasmic; it reads RQIYKEYQEG…RLDSRSLYIS (69 aa). A helical transmembrane segment spans residues 134-154; it reads IVLALVKTVAFPLTIEVAFIL. Residues 155–171 lie on the Extracellular side of the membrane; sequence QQRRQHPEMSLIWTLYR. The chain crosses the membrane as a helical span at residues 172–192; it reads LFPLIISNFLNNCYFGAMVVV. Topologically, residues 193 to 260 are cytoplasmic; sequence KEILYALNRR…HSGKYLTPMS (68 aa). The helical transmembrane segment at 261 to 281 threads the bilayer; the sequence is LSMILSLICHLLGITVGFYSL. Topologically, residues 282–296 are extracellular; sequence YYAIADTLIMGKPYD. Residues 297–317 traverse the membrane as a helical segment; the sequence is GLGSLINLVFLSISLAEITLL. At 318-376 the chain is on the cytoplasmic side; it reads THLCNHLLVATRRSAVILQEMNLQHADSRYRQAVHGFTLLVTVTKYQIKPLGLYELDMR. Residues 377–397 form a helical membrane-spanning segment; sequence LISNVFSAVASFLLILVQADL. The Extracellular portion of the chain corresponds to 398–404; that stretch reads SQRFKMQ.

The protein belongs to the insect chemoreceptor superfamily. Gustatory receptor (GR) family. Gr22e subfamily. In terms of tissue distribution, in larvae, is expressed in neurons of the terminal external chemosensory organ.

It localises to the cell membrane. Its function is as follows. Probable gustatory receptor which mediates acceptance or avoidance behavior, depending on its substrates. The polypeptide is Putative gustatory receptor 94a (Gr94a) (Drosophila melanogaster (Fruit fly)).